Reading from the N-terminus, the 62-residue chain is MATKIKFKYKGQDLEVDISKVKKVWKVGKMVSFTYDDNGKTGRGAVSEKDAPKELLNMIGKK.

It belongs to the 7 kDa DNA-binding/endoribonuclease P2 family. As to quaternary structure, monomer.

The protein resides in the cytoplasm. In terms of biological role, can constrain negative DNA supercoils. May be involved in maintaining the integrity of the genome at high temperature. The protein is DNA-binding protein 7 of Metallosphaera sedula (strain ATCC 51363 / DSM 5348 / JCM 9185 / NBRC 15509 / TH2).